A 227-amino-acid chain; its full sequence is Cytochrome c oxidase subunit 2 (227 aa).

Residues 1–14 lie on the Mitochondrial intermembrane side of the membrane; it reads MAHPFQTGLQDATS. Residues 15-45 traverse the membrane as a helical segment; sequence PIMEELLHFHDHTLMIVFLISSLVLYIISIM. Residues 46–59 are Mitochondrial matrix-facing; sequence LTTKLTHTNTMDAQ. The chain crosses the membrane as a helical span at residues 60 to 87; sequence EVETVWTILPAIILIMIALPSLRILYMM. Over 88–227 the chain is Mitochondrial intermembrane; sequence DEINNPSLTV…YFEKWSASML (140 aa). The Cu cation site is built by His-161, Cys-196, Glu-198, Cys-200, His-204, and Met-207. Glu-198 is a binding site for Mg(2+). Tyr-218 carries the post-translational modification Phosphotyrosine.

The protein belongs to the cytochrome c oxidase subunit 2 family. Component of the cytochrome c oxidase (complex IV, CIV), a multisubunit enzyme composed of 14 subunits. The complex is composed of a catalytic core of 3 subunits MT-CO1, MT-CO2 and MT-CO3, encoded in the mitochondrial DNA, and 11 supernumerary subunits COX4I, COX5A, COX5B, COX6A, COX6B, COX6C, COX7A, COX7B, COX7C, COX8 and NDUFA4, which are encoded in the nuclear genome. The complex exists as a monomer or a dimer and forms supercomplexes (SCs) in the inner mitochondrial membrane with NADH-ubiquinone oxidoreductase (complex I, CI) and ubiquinol-cytochrome c oxidoreductase (cytochrome b-c1 complex, complex III, CIII), resulting in different assemblies (supercomplex SCI(1)III(2)IV(1) and megacomplex MCI(2)III(2)IV(2)). Found in a complex with TMEM177, COA6, COX18, COX20, SCO1 and SCO2. Interacts with TMEM177 in a COX20-dependent manner. Interacts with COX20. Interacts with COX16. Cu cation is required as a cofactor.

It localises to the mitochondrion inner membrane. It catalyses the reaction 4 Fe(II)-[cytochrome c] + O2 + 8 H(+)(in) = 4 Fe(III)-[cytochrome c] + 2 H2O + 4 H(+)(out). Component of the cytochrome c oxidase, the last enzyme in the mitochondrial electron transport chain which drives oxidative phosphorylation. The respiratory chain contains 3 multisubunit complexes succinate dehydrogenase (complex II, CII), ubiquinol-cytochrome c oxidoreductase (cytochrome b-c1 complex, complex III, CIII) and cytochrome c oxidase (complex IV, CIV), that cooperate to transfer electrons derived from NADH and succinate to molecular oxygen, creating an electrochemical gradient over the inner membrane that drives transmembrane transport and the ATP synthase. Cytochrome c oxidase is the component of the respiratory chain that catalyzes the reduction of oxygen to water. Electrons originating from reduced cytochrome c in the intermembrane space (IMS) are transferred via the dinuclear copper A center (CU(A)) of subunit 2 and heme A of subunit 1 to the active site in subunit 1, a binuclear center (BNC) formed by heme A3 and copper B (CU(B)). The BNC reduces molecular oxygen to 2 water molecules using 4 electrons from cytochrome c in the IMS and 4 protons from the mitochondrial matrix. In Ailuropoda melanoleuca (Giant panda), this protein is Cytochrome c oxidase subunit 2 (MT-CO2).